A 319-amino-acid polypeptide reads, in one-letter code: Acetyl-coenzyme A carboxylase carboxyl transferase subunit alpha (319 aa).

The CoA carboxyltransferase C-terminal domain occupies 39–296 (EINRLRSKSI…KTQLLLDLTE (258 aa)).

This sequence belongs to the AccA family. In terms of assembly, acetyl-CoA carboxylase is a heterohexamer composed of biotin carboxyl carrier protein (AccB), biotin carboxylase (AccC) and two subunits each of ACCase subunit alpha (AccA) and ACCase subunit beta (AccD).

It is found in the cytoplasm. The catalysed reaction is N(6)-carboxybiotinyl-L-lysyl-[protein] + acetyl-CoA = N(6)-biotinyl-L-lysyl-[protein] + malonyl-CoA. Its pathway is lipid metabolism; malonyl-CoA biosynthesis; malonyl-CoA from acetyl-CoA: step 1/1. In terms of biological role, component of the acetyl coenzyme A carboxylase (ACC) complex. First, biotin carboxylase catalyzes the carboxylation of biotin on its carrier protein (BCCP) and then the CO(2) group is transferred by the carboxyltransferase to acetyl-CoA to form malonyl-CoA. This chain is Acetyl-coenzyme A carboxylase carboxyl transferase subunit alpha, found in Blochmanniella pennsylvanica (strain BPEN).